Here is a 253-residue protein sequence, read N- to C-terminus: tRNA 2'-phosphotransferase 1 (253 aa).

Position 1 is an N-acetylmethionine (M1). 2 disordered regions span residues 1–29 and 225–253; these read MNFS…DRDV and KPLS…RIQQ. S240 carries the post-translational modification Phosphoserine. Over residues 243–253 the composition is skewed to basic residues; that stretch reads HSSRERRRIQQ.

Belongs to the KptA/TPT1 family. As to expression, widely expressed. Weakly or not expressed in lung, spleen, small intestine and peripheral blood leukocytes.

The enzyme catalyses 2'-phospho-[ligated tRNA] + NAD(+) = mature tRNA + ADP-alpha-D-ribose 1'',2''-cyclic phosphate + nicotinamide. Its function is as follows. Catalyzes the last step of tRNA splicing, the transfer of the splice junction 2'-phosphate from ligated tRNA to NAD to produce ADP-ribose 1''-2'' cyclic phosphate. The sequence is that of tRNA 2'-phosphotransferase 1 (TRPT1) from Homo sapiens (Human).